The primary structure comprises 387 residues: Sorting nexin-7 (387 aa).

A PX domain is found at 30 to 151 (KDLFITVDEP…IFLTAQAWEL (122 aa)). The a 1,2-diacyl-sn-glycero-3-phospho-(1D-myo-inositol-3-phosphate) site is built by Arg73, Gln75, Lys103, and Arg117. Residues 178-387 (GVKNRPEEFM…HLEETSEDKP (210 aa)) form the BAR domain.

This sequence belongs to the sorting nexin family. As to quaternary structure, heterodimer; heterodimerizes with SNX4.

The protein localises to the early endosome membrane. Functionally, involved in the regulation of endocytosis and in several stages of intracellular trafficking. Together with SNX4, involved in autophagosome assembly by regulating trafficking and recycling of phospholipid scramblase ATG9A. This Macaca fascicularis (Crab-eating macaque) protein is Sorting nexin-7 (SNX7).